Here is a 54-residue protein sequence, read N- to C-terminus: UPF0181 protein PM0480 (54 aa).

Belongs to the UPF0181 family.

This Pasteurella multocida (strain Pm70) protein is UPF0181 protein PM0480.